A 191-amino-acid polypeptide reads, in one-letter code: Neuronal calcium sensor 1 (191 aa).

Residue G2 is the site of N-myristoyl glycine attachment. EF-hand domains follow at residues 24–59 (EAEI…FPFG), 60–95 (DPSK…TSRG), 96–131 (TVEE…IYRM), and 144–179 (TPEK…DPTI). D73, N75, D77, E84, D109, D111, D113, E120, D157, N159, D161, K163, and E168 together coordinate Ca(2+).

The protein belongs to the recoverin family.

Functionally, neuronal calcium sensor, regulator of G protein-coupled receptor phosphorylation in a calcium dependent manner. Regulates neurite extension and branching by activity-dependent (Ca2+) influx in growth cones. This is Neuronal calcium sensor 1 from Aplysia californica (California sea hare).